The following is a 1481-amino-acid chain: Coiled-coil domain-containing protein 88B (1481 aa).

Coiled-coil stretches lie at residues 200 to 225 (ELVAEELEMQLRSLTGMMSRLARERD) and 258 to 491 (SHHL…GSQH). Disordered regions lie at residues 430–458 (ELQRSLEPPPGSPGEASLPGAAPSLQDEV), 494–731 (LEEQ…AIPE), and 1331–1481 (PRRE…SLSQ). Residue Ser441 is modified to Phosphoserine. Composition is skewed to polar residues over residues 542-557 (ASYSDITRSPKCSQAP) and 568-590 (QMVSQDPQTSDQALQESDPTVET). Phosphoserine is present on Ser649. Residues 660 to 695 (TLREPLKDQKALDRELELSKQQKETGRHEQRPKGLE) show a composition bias toward basic and acidic residues. Residues 731-1308 (EEQALRDEVA…KIMDQYRVLE (578 aa)) are a coiled coil. A phosphoserine mark is found at Ser1353 and Ser1384. The span at 1371 to 1386 (TGSSSPAPMRRVQSSL) shows a compositional bias: polar residues. A compositionally biased stretch (basic and acidic residues) spans 1453–1472 (LSEHEADDTREAFQEQKPEK).

Belongs to the CCDC88 family. In terms of assembly, homodimer. Interacts with DOCK8. Interacts (via C-terminus) with intact microtubules. Interacts with dynein-dynactin motor complex. Interacts (via C-terminus) with HSPA5. As to expression, abundantly expressed in immune cells, including both CD4(+) and CD8(+) T-cells and in myeloid cells (at protein level). Expressed in endothelium (at protein level). Expressed specifically in spleen, bone marrow, lymph nodes and thymus. Expressed in liver and heart.

It localises to the membrane. Its subcellular location is the cytoplasm. It is found in the cytoskeleton. The protein resides in the microtubule organizing center. The protein localises to the endoplasmic reticulum. It localises to the golgi apparatus. Acts as a positive regulator of T-cell maturation and inflammatory function. Required for several functions of T-cells in both the CD4(+) and the CD8(+) compartments and this includes expression of cell surface markers of activation, proliferation, and cytokine production in response to specific or non-specific stimulation and during the course of infection with the mouse malaria parasite Plasmodium berghei. Enhances NK cell cytotoxicity by positively regulating polarization of microtubule-organizing center (MTOC) to cytotoxic synapse, lytic granule transport along microtubules, and dynein-mediated clustering to MTOC. Interacts with HSPA5 and stabilizes the interaction between HSPA5 and ERN1, leading to suppression of ERN1-induced JNK activation and endoplasmic reticulum stress-induced apoptosis. The chain is Coiled-coil domain-containing protein 88B (Ccdc88b) from Mus musculus (Mouse).